The following is a 400-amino-acid chain: Coenzyme A biosynthesis bifunctional protein CoaBC (400 aa).

Residues 1–190 (MKLNGKHIVV…SQKQDLQGLN (190 aa)) form a phosphopantothenoylcysteine decarboxylase region. The active-site Proton donor is the C158. The phosphopantothenate--cysteine ligase stretch occupies residues 191–400 (VSITAGPTRE…EIIERYQKTL (210 aa)). Residues 273-275 (GCA), D279, K289, 305-308 (PDII), F324, K338, and K342 contribute to the CTP site.

In the N-terminal section; belongs to the HFCD (homo-oligomeric flavin containing Cys decarboxylase) superfamily. The protein in the C-terminal section; belongs to the PPC synthetase family. It depends on Mg(2+) as a cofactor. FMN serves as cofactor.

The enzyme catalyses N-[(R)-4-phosphopantothenoyl]-L-cysteine + H(+) = (R)-4'-phosphopantetheine + CO2. It catalyses the reaction (R)-4'-phosphopantothenate + L-cysteine + CTP = N-[(R)-4-phosphopantothenoyl]-L-cysteine + CMP + diphosphate + H(+). It participates in cofactor biosynthesis; coenzyme A biosynthesis; CoA from (R)-pantothenate: step 2/5. Its pathway is cofactor biosynthesis; coenzyme A biosynthesis; CoA from (R)-pantothenate: step 3/5. Its function is as follows. Catalyzes two sequential steps in the biosynthesis of coenzyme A. In the first step cysteine is conjugated to 4'-phosphopantothenate to form 4-phosphopantothenoylcysteine. In the second step the latter compound is decarboxylated to form 4'-phosphopantotheine. The sequence is that of Coenzyme A biosynthesis bifunctional protein CoaBC from Haemophilus influenzae (strain ATCC 51907 / DSM 11121 / KW20 / Rd).